Reading from the N-terminus, the 115-residue chain is Basic leucine zipper transcriptional factor ATF-like (115 aa).

Positions 1 to 57 (MQQEPDRNEQGYCSSPPSSNKQDSSDDTKKIQRREKNRIAAQKSRQRQTQKADSLHI) are disordered. Residues 27–90 (DTKKIQRREK…KYLTCVLSTH (64 aa)) form the bZIP domain. The interval 29-51 (KKIQRREKNRIAAQKSRQRQTQK) is basic motif. The leucine-zipper stretch occupies residues 55 to 83 (LHIESENLERLNSALRGEISGLREELKYL).

This sequence belongs to the bZIP family.

It is found in the nucleus. The protein localises to the cytoplasm. In terms of biological role, AP-1 family transcription factor that controls the differentiation of lineage-specific cells in the immune system: specifically mediates the differentiation of T-helper 17 cells (Th17), follicular T-helper cells (TfH), CD8(+) dendritic cells and class-switch recombination (CSR) in B-cells. This chain is Basic leucine zipper transcriptional factor ATF-like (batf), found in Xenopus tropicalis (Western clawed frog).